Here is a 459-residue protein sequence, read N- to C-terminus: FBD-associated F-box protein At4g13985 (459 aa).

Positions 18 to 64 (VDRLRNLPDCLLFKILLNLPTKDVVKLSVLSRRWRNVWRYVPGLDLE) constitute an F-box domain. An FBD domain is found at 375–429 (KEGANILPGPRRFLTSLEYVKIAKPMAAEASEIKLKLVSYFLENSTILKKLTLCL).

The protein is FBD-associated F-box protein At4g13985 of Arabidopsis thaliana (Mouse-ear cress).